Consider the following 384-residue polypeptide: Dual-specificity RNA methyltransferase RlmN (384 aa).

Residue Glu105 is the Proton acceptor of the active site. Residues 111 to 350 (EVDRATLCVS…TIVRKTRGDD (240 aa)) form the Radical SAM core domain. Cys118 and Cys355 are oxidised to a cystine. [4Fe-4S] cluster is bound by residues Cys125, Cys129, and Cys132. S-adenosyl-L-methionine-binding positions include 179–180 (GE), Ser211, 233–235 (SLH), and Asn312. The active-site S-methylcysteine intermediate is the Cys355.

It belongs to the radical SAM superfamily. RlmN family. It depends on [4Fe-4S] cluster as a cofactor.

It localises to the cytoplasm. It carries out the reaction adenosine(2503) in 23S rRNA + 2 reduced [2Fe-2S]-[ferredoxin] + 2 S-adenosyl-L-methionine = 2-methyladenosine(2503) in 23S rRNA + 5'-deoxyadenosine + L-methionine + 2 oxidized [2Fe-2S]-[ferredoxin] + S-adenosyl-L-homocysteine. The enzyme catalyses adenosine(37) in tRNA + 2 reduced [2Fe-2S]-[ferredoxin] + 2 S-adenosyl-L-methionine = 2-methyladenosine(37) in tRNA + 5'-deoxyadenosine + L-methionine + 2 oxidized [2Fe-2S]-[ferredoxin] + S-adenosyl-L-homocysteine. Functionally, specifically methylates position 2 of adenine 2503 in 23S rRNA and position 2 of adenine 37 in tRNAs. m2A2503 modification seems to play a crucial role in the proofreading step occurring at the peptidyl transferase center and thus would serve to optimize ribosomal fidelity. The chain is Dual-specificity RNA methyltransferase RlmN from Escherichia coli O9:H4 (strain HS).